A 531-amino-acid polypeptide reads, in one-letter code: UDP-glucuronosyltransferase 1A5 (531 aa).

An N-terminal signal peptide occupies residues 1–25 (MGLHVTLQGLAGLLLLLYALPWAEG). Asn116, Asn131, Asn139, Asn293, and Asn431 each carry an N-linked (GlcNAc...) asparagine glycan. A helical transmembrane segment spans residues 489-505 (VIGFLLAIVLTVVFIVY).

It belongs to the UDP-glycosyltransferase family. In terms of assembly, homodimer. Homooligomer. Interacts with UGT1A1, UGT1A3, UGT1A4, UGT1A6, UGT1A7, UGT1A8, UGT1A9 and UGT1A10 to form heterodimers.

The protein resides in the endoplasmic reticulum membrane. It catalyses the reaction glucuronate acceptor + UDP-alpha-D-glucuronate = acceptor beta-D-glucuronoside + UDP + H(+). The catalysed reaction is zolasartan + UDP-alpha-D-glucuronate = zolarsartan-1-N-beta-D-glucuronide + UDP. Functionally, UDP-glucuronosyltransferase (UGT) that catalyzes phase II biotransformation reactions in which lipophilic substrates are conjugated with glucuronic acid to increase the metabolite's water solubility, thereby facilitating excretion into either the urine or bile. Essential for the elimination and detoxification of drugs, xenobiotics and endogenous compounds. Involved in the glucuronidation of the AGTR1 angiotensin receptor antagonist zolarsatan, a drug which can inhibit the effect of angiotensin II. In Rattus norvegicus (Rat), this protein is UDP-glucuronosyltransferase 1A5.